Reading from the N-terminus, the 510-residue chain is Dermokine (510 aa).

A signal peptide spans 1-21; it reads MKLKGSLACLLLFLLLGSGEA. The interval 117–362 is disordered; the sequence is VDPAHKSWQG…SSGEGEAVSG (246 aa). Residues 124 to 137 show a composition bias toward polar residues; that stretch reads WQGTPGSNGAWGTN. The span at 141-158 shows a compositional bias: gly residues; that stretch reads PSGGHGIPGSQGSSGGPG. Residues 194–221 are compositionally biased toward polar residues; that stretch reads GANSQGTSPQPGSVRSNNNRNTECTTPP. 3 stretches are compositionally biased toward gly residues: residues 222 to 231, 240 to 254, and 264 to 292; these read GSGGSSGNSG, TNGG…GGSN, and SNGG…GGSN. Composition is skewed to low complexity over residues 293–303 and 319–332; these read AGSSGSSGSSS and PSPS…SGVR. The span at 344 to 355 shows a compositional bias: gly residues; sequence GGSGGQGQGSSG.

Belongs to the dermokine family. In terms of assembly, homooligomer. Seems to be able to homodimerize and homotrimerize. Post-translationally, O-glycosylated.

The protein resides in the secreted. Its function is as follows. May act as a soluble regulator of keratinocyte differentiation. The protein is Dermokine (DMKN) of Bos taurus (Bovine).